The primary structure comprises 297 residues: ABSCISIC ACID-INSENSITIVE 5-like protein 2 (297 aa).

A phosphoserine mark is found at serine 21, serine 43, and serine 81. 2 disordered regions span residues 100–119 and 138–157; these read IQQN…QPTL and IPGS…SGAG. The residue at position 118 (threonine 118) is a Phosphothreonine. A compositionally biased stretch (gly residues) spans 146-157; it reads PVGGGSAGSGAG. In terms of domain architecture, bZIP spans 225–288; that stretch reads VERRQKRMIK…SVPPPDPKRQ (64 aa). The segment at 227–246 is basic motif; it reads RRQKRMIKNRESAARSRARK. The tract at residues 253-267 is leucine-zipper; the sequence is LEIKVSRLEEENERL. A disordered region spans residues 272 to 297; it reads EVEKILPSVPPPDPKRQLRRTSSAPF.

Belongs to the bZIP family. ABI5 subfamily. In terms of assembly, DNA-binding heterodimer with ABI5/DPBF1, DPBF2 or EEL/DPBF4. Interacts with the AFP proteins AFP1, AFP2, AFP3 and AFP4. Predominantly expressed in seeds.

It is found in the nucleus. In terms of biological role, binds to the embryo specification element and the ABA-responsive element (ABRE) of the Dc3 gene promoter. Could participate in abscisic acid-regulated gene expression during seed development. This is ABSCISIC ACID-INSENSITIVE 5-like protein 2 (DPBF3) from Arabidopsis thaliana (Mouse-ear cress).